The following is a 412-amino-acid chain: Small ribosomal subunit protein mL103 (rPPR7) (412 aa).

The transit peptide at 1–14 directs the protein to the mitochondrion; it reads MASSRISLRLVRRF. Over residues 21-37 the composition is skewed to polar residues; sequence GTTTAPSSGKISVSKAK. The segment at 21–43 is disordered; the sequence is GTTTAPSSGKISVSKAKSTLRKE. 8 PPR repeats span residues 101-135, 136-166, 173-207, 208-242, 243-276, 277-311, 312-346, and 347-377; these read EEPF…GTPR, SAVS…IPQR, DKIS…GMEV, TTIA…GCEL, DNAA…GLKP, DTIS…NCAP, NAAT…HKIP, and DFNT…VKKK.

Belongs to the PPR family. P subfamily. Component of the mitochondrial ribosome small subunit.

Its subcellular location is the mitochondrion. This chain is Small ribosomal subunit protein mL103 (rPPR7), found in Arabidopsis thaliana (Mouse-ear cress).